Here is a 124-residue protein sequence, read N- to C-terminus: Small ribosomal subunit protein uS12 (124 aa).

Asp89 is subject to 3-methylthioaspartic acid.

The protein belongs to the universal ribosomal protein uS12 family. Part of the 30S ribosomal subunit. Contacts proteins S8 and S17. May interact with IF1 in the 30S initiation complex.

Functionally, with S4 and S5 plays an important role in translational accuracy. Its function is as follows. Interacts with and stabilizes bases of the 16S rRNA that are involved in tRNA selection in the A site and with the mRNA backbone. Located at the interface of the 30S and 50S subunits, it traverses the body of the 30S subunit contacting proteins on the other side and probably holding the rRNA structure together. The combined cluster of proteins S8, S12 and S17 appears to hold together the shoulder and platform of the 30S subunit. This is Small ribosomal subunit protein uS12 (rpsL) from Mannheimia haemolytica (Pasteurella haemolytica).